Reading from the N-terminus, the 563-residue chain is Ataxin-10 homolog (563 aa).

Thr433 is modified (phosphothreonine). A disordered region spans residues 544–563 (VSKEEDPGNENSEIISIDED). At Ser559 the chain carries Phosphoserine.

It belongs to the ataxin-10 family.

It localises to the cytoplasm. Its function is as follows. May play a role in the regulation of cytokinesis. The chain is Ataxin-10 homolog (CTR86) from Saccharomyces cerevisiae (strain ATCC 204508 / S288c) (Baker's yeast).